Consider the following 362-residue polypeptide: Peptide chain release factor 1 (362 aa).

N5-methylglutamine is present on glutamine 237.

It belongs to the prokaryotic/mitochondrial release factor family. In terms of processing, methylated by PrmC. Methylation increases the termination efficiency of RF1.

It is found in the cytoplasm. Its function is as follows. Peptide chain release factor 1 directs the termination of translation in response to the peptide chain termination codons UAG and UAA. This is Peptide chain release factor 1 from Vibrio campbellii (strain ATCC BAA-1116).